Reading from the N-terminus, the 320-residue chain is Ferrochelatase (320 aa).

Residues His-194 and Glu-275 each contribute to the Fe cation site.

This sequence belongs to the ferrochelatase family. As to quaternary structure, monomer.

It localises to the cytoplasm. The enzyme catalyses heme b + 2 H(+) = protoporphyrin IX + Fe(2+). It functions in the pathway porphyrin-containing compound metabolism; protoheme biosynthesis; protoheme from protoporphyrin-IX: step 1/1. Its function is as follows. Catalyzes the ferrous insertion into protoporphyrin IX. This chain is Ferrochelatase, found in Salmonella schwarzengrund (strain CVM19633).